The sequence spans 426 residues: Enolase (426 aa).

Residue Gln163 coordinates (2R)-2-phosphoglycerate. Glu205 acts as the Proton donor in catalysis. Residues Asp242, Glu285, and Asp312 each coordinate Mg(2+). Residues Lys337, Arg366, Ser367, and Lys388 each coordinate (2R)-2-phosphoglycerate. Catalysis depends on Lys337, which acts as the Proton acceptor.

The protein belongs to the enolase family. As to quaternary structure, component of the RNA degradosome, a multiprotein complex involved in RNA processing and mRNA degradation. It depends on Mg(2+) as a cofactor.

The protein localises to the cytoplasm. It is found in the secreted. It localises to the cell surface. It carries out the reaction (2R)-2-phosphoglycerate = phosphoenolpyruvate + H2O. The protein operates within carbohydrate degradation; glycolysis; pyruvate from D-glyceraldehyde 3-phosphate: step 4/5. Its function is as follows. Catalyzes the reversible conversion of 2-phosphoglycerate (2-PG) into phosphoenolpyruvate (PEP). It is essential for the degradation of carbohydrates via glycolysis. The protein is Enolase of Nitrosococcus oceani (strain ATCC 19707 / BCRC 17464 / JCM 30415 / NCIMB 11848 / C-107).